The following is a 505-amino-acid chain: ATP synthase subunit alpha (505 aa).

Gly171 to Thr178 is a binding site for ATP.

This sequence belongs to the ATPase alpha/beta chains family. In terms of assembly, F-type ATPases have 2 components, CF(1) - the catalytic core - and CF(0) - the membrane proton channel. CF(1) has five subunits: alpha(3), beta(3), gamma(1), delta(1), epsilon(1). CF(0) has three main subunits: a(1), b(2) and c(9-12). The alpha and beta chains form an alternating ring which encloses part of the gamma chain. CF(1) is attached to CF(0) by a central stalk formed by the gamma and epsilon chains, while a peripheral stalk is formed by the delta and b chains.

It is found in the cell inner membrane. The enzyme catalyses ATP + H2O + 4 H(+)(in) = ADP + phosphate + 5 H(+)(out). Functionally, produces ATP from ADP in the presence of a proton gradient across the membrane. The alpha chain is a regulatory subunit. In Aliarcobacter butzleri (strain RM4018) (Arcobacter butzleri), this protein is ATP synthase subunit alpha.